The following is a 1175-amino-acid chain: DNA ligase 3 (1175 aa).

A disordered region spans residues 195-243 (HDFDNDNGDGDDGDGDDNDDDDGDGDSDSDKKKKKSSGGSGSDSGSKKK). A compositionally biased stretch (acidic residues) spans 199–221 (NDNGDGDDGDGDDNDDDDGDGDS). E281 contributes to the ATP binding site. K283 functions as the N6-AMP-lysine intermediate in the catalytic mechanism. The ATP site is built by R288 and R303. Mg(2+) is bound by residues E334 and E432. Positions 437, 448, and 452 each coordinate ATP. Disordered stretches follow at residues 612–669 (PVGK…LKFV) and 829–869 (KSSP…KRGR). 2 stretches are compositionally biased toward low complexity: residues 622 to 635 (TTTTTTTTTTTTTT) and 829 to 859 (KSSPTTTSPTTTSPTTTSPKITSPSSSSSPS). Residues 883 to 976 (PSLPIFEDVN…KLLPLHEDYI (94 aa)) form the BRCT 1 domain. Positions 984-1036 (PDYSQSSSSSSMSIEEEKIVVTTTSDDPSEGNQQQQDKKVIKESKIIQSKDHS) are disordered. A compositionally biased stretch (low complexity) spans 987–996 (SQSSSSSSMS). Positions 1004–1018 (VTTTSDDPSEGNQQQ) are enriched in polar residues. A compositionally biased stretch (basic and acidic residues) spans 1019–1036 (QDKKVIKESKIIQSKDHS). Residues 1067–1174 (HLLSIFQECI…DLLDVKNYKL (108 aa)) form the BRCT 2 domain.

This sequence belongs to the ATP-dependent DNA ligase family. It depends on Mg(2+) as a cofactor.

It is found in the nucleus. The catalysed reaction is ATP + (deoxyribonucleotide)n-3'-hydroxyl + 5'-phospho-(deoxyribonucleotide)m = (deoxyribonucleotide)n+m + AMP + diphosphate.. The alpha isoform interacts with DNA-repair protein XRCC1 and can correct defective DNA strand-break repair and sister chromatid exchange following treatment with ionizing radiation and alkylating agents. The beta isoform does not interact with XRCC1 and may be specifically involved in the completion of homologous recombination events that occur during meiotic prophase. This chain is DNA ligase 3 (lig3), found in Dictyostelium discoideum (Social amoeba).